The sequence spans 46 residues: Large ribosomal subunit protein bL34c (46 aa).

Residues 1 to 46 (MSKRTLEGSHRKKVRKSGFLSRSQSPTGRRILKARRKKGRKMLVKY) form a disordered region. Residues 30–46 (RILKARRKKGRKMLVKY) show a composition bias toward basic residues.

Belongs to the bacterial ribosomal protein bL34 family.

Its subcellular location is the plastid. It is found in the cyanelle. The polypeptide is Large ribosomal subunit protein bL34c (rpl34) (Cyanophora paradoxa).